Here is a 721-residue protein sequence, read N- to C-terminus: Teichoic acid poly(glycerol phosphate) polymerase (721 aa).

CDP-glycerol-binding positions include 443–447 (WHGTP), Arg511, 545–546 (PT), 582–584 (RMH), 624–625 (SS), and Asp629.

Belongs to the CDP-glycerol glycerophosphotransferase family.

The protein resides in the cell membrane. It catalyses the reaction 4-O-[(2R)-glycerylphospho]-N-acetyl-beta-D-mannosaminyl-(1-&gt;4)-N-acetyl-alpha-D-glucosaminyl di-trans,octa-cis-undecaprenyl diphosphate + n CDP-glycerol = 4-O-{[(2R)-1-glycerylphospho](n)-(2R)-1-glycerylphospho}-N-acetyl-beta-D-mannosaminyl-(1-&gt;4)-N-acetyl-alpha-D-glucosaminyl undecaprenyl diphosphate + n CMP + n H(+). It functions in the pathway cell wall biogenesis; poly(glycerol phosphate) teichoic acid biosynthesis. Its function is as follows. Responsible for the polymerization of the main chain of the major teichoic acid by sequential transfer of glycerol phosphate units from CDP-glycerol to the disaccharide linkage unit. Synthesizes polymers of approximately 35 glycerol phosphate units in length. The polypeptide is Teichoic acid poly(glycerol phosphate) polymerase (Staphylococcus epidermidis (strain ATCC 35984 / DSM 28319 / BCRC 17069 / CCUG 31568 / BM 3577 / RP62A)).